The sequence spans 338 residues: UbiA prenyltransferase domain-containing protein 1 (338 aa).

Ala-2 bears the N-acetylalanine mark. 8 helical membrane passes run Leu-83 to Thr-103, Phe-134 to Pro-154, Leu-160 to Phe-180, Leu-188 to Gly-208, Ser-209 to Leu-229, Ile-245 to Leu-267, Thr-277 to Glu-297, and Leu-315 to Leu-335.

It belongs to the UbiA prenyltransferase family. As to quaternary structure, interacts with HMGCR and SOAT1. In terms of tissue distribution, ubiquitously expressed.

The protein resides in the endoplasmic reticulum membrane. The protein localises to the golgi apparatus membrane. It is found in the mitochondrion membrane. It localises to the cytoplasm. Its subcellular location is the nucleus. The catalysed reaction is menadiol + (2E,6E,10E)-geranylgeranyl diphosphate = menaquinol-4 + diphosphate. The enzyme catalyses all-trans-decaprenyl diphosphate + 4-hydroxybenzoate = 4-hydroxy-3-(all-trans-decaprenyl)benzoate + diphosphate. Its pathway is quinol/quinone metabolism; menaquinone biosynthesis. The protein operates within cofactor biosynthesis; ubiquinone biosynthesis. Its function is as follows. Prenyltransferase that mediates the formation of menaquinone-4 (MK-4) and coenzyme Q10. MK-4 is a vitamin K2 isoform present at high concentrations in the brain, kidney and pancreas, and is required for endothelial cell development. Mediates the conversion of phylloquinone (PK) into MK-4, probably by cleaving the side chain of phylloquinone (PK) to release 2-methyl-1,4-naphthoquinone (menadione; K3) and then prenylating it with geranylgeranyl pyrophosphate (GGPP) to form MK-4. Also plays a role in cardiovascular development independently of MK-4 biosynthesis, by acting as a coenzyme Q10 biosynthetic enzyme: coenzyme Q10, also named ubiquinone, plays an important antioxidant role in the cardiovascular system. Mediates biosynthesis of coenzyme Q10 in the Golgi membrane, leading to protect cardiovascular tissues from NOS3/eNOS-dependent oxidative stress. The chain is UbiA prenyltransferase domain-containing protein 1 from Homo sapiens (Human).